The chain runs to 244 residues: MKTYFISDLHLAPSRQDITDCFLTFMKNEALEADALYVLGDLFEFWIGDDDTSEFANSIRQTFIDLVNTGVPCYFTQGNRDFLVGKKFAKQTGVQLLDEVSTIDIYGQKAVVLHGDTLCTEDIKYLAFREKVHQPWLQWVFNRIPFFIKKKIVSKVQSDIKDDKQTKSLDIMDVTQQEVENVMKQHNVDLMIHGHTHRPNIHSFSANNCTKTRIVLGDWYTQGSVLVFTPQSFELQNREFSNRF.

Mn(2+) is bound by residues D8, H10, D41, N79, and H114. A substrate-binding site is contributed by 79 to 80; the sequence is NR. The substrate site is built by D122, K164, K167, and H195. Positions 195 and 197 each coordinate Mn(2+).

This sequence belongs to the LpxH family. The cofactor is Mn(2+).

The protein localises to the cell inner membrane. The catalysed reaction is UDP-2-N,3-O-bis[(3R)-3-hydroxytetradecanoyl]-alpha-D-glucosamine + H2O = 2-N,3-O-bis[(3R)-3-hydroxytetradecanoyl]-alpha-D-glucosaminyl 1-phosphate + UMP + 2 H(+). The protein operates within glycolipid biosynthesis; lipid IV(A) biosynthesis; lipid IV(A) from (3R)-3-hydroxytetradecanoyl-[acyl-carrier-protein] and UDP-N-acetyl-alpha-D-glucosamine: step 4/6. In terms of biological role, hydrolyzes the pyrophosphate bond of UDP-2,3-diacylglucosamine to yield 2,3-diacylglucosamine 1-phosphate (lipid X) and UMP by catalyzing the attack of water at the alpha-P atom. Involved in the biosynthesis of lipid A, a phosphorylated glycolipid that anchors the lipopolysaccharide to the outer membrane of the cell. The sequence is that of UDP-2,3-diacylglucosamine hydrolase from Vibrio atlanticus (strain LGP32) (Vibrio splendidus (strain Mel32)).